Here is a 287-residue protein sequence, read N- to C-terminus: Eukaryotic translation initiation factor 3 subunit F (287 aa).

The MPN domain occupies 12–142 (VRVHPVVLFQ…IKAYVCVSLG (131 aa)).

It belongs to the eIF-3 subunit F family. In terms of assembly, component of the eukaryotic translation initiation factor 3 (eIF-3) complex.

The protein resides in the cytoplasm. In terms of biological role, component of the eukaryotic translation initiation factor 3 (eIF-3) complex, which is involved in protein synthesis of a specialized repertoire of mRNAs and, together with other initiation factors, stimulates binding of mRNA and methionyl-tRNAi to the 40S ribosome. The eIF-3 complex specifically targets and initiates translation of a subset of mRNAs involved in cell proliferation. In Anopheles gambiae (African malaria mosquito), this protein is Eukaryotic translation initiation factor 3 subunit F.